The sequence spans 1241 residues: Anion exchange protein 2 (1241 aa).

A disordered region spans residues 1 to 240; the sequence is MSSAPRRPAK…RSYNLQERRR (240 aa). Residues 1 to 707 are Cytoplasmic-facing; sequence MSSAPRRPAK…SDFRDALDPQ (707 aa). 2 stretches are compositionally biased toward basic and acidic residues: residues 37 to 49 and 58 to 75; these read ELHRTLGVERFEE and GGEEPGRSYGEEDFEYHR. 2 stretches are compositionally biased toward basic residues: residues 76–85 and 94–110; these read QSSHHIHHPL and RRRKTPQGPGRKPRRRP. Ser113, Ser132, Ser144, Ser170, Ser172, and Ser173 each carry phosphoserine. Positions 120–133 are enriched in acidic residues; the sequence is TIEEGEEDEDEASE. The segment covering 141-155 has biased composition (low complexity); the sequence is TQPSPVSTPSSVQFF. Residue Thr183 is modified to Phosphothreonine. The span at 189-209 shows a compositional bias: low complexity; that stretch reads GAQAGTQVEEAEAEAVAVASG. Positions 210-219 are enriched in gly residues; it reads TAGGDDGGAS. Ser243 bears the Phosphoserine mark. Residue Thr257 is modified to Phosphothreonine. Lys274 carries the post-translational modification N6-methyllysine. The disordered stretch occupies residues 288 to 320; that stretch reads LVRKNAKGSTQSGREGREPGPTPRARPRAPHKP. Ser443 is modified (phosphoserine). Residues 449-471 form a disordered region; sequence SLLGHHHGQGAESDPHVTEPLMG. The next 4 membrane-spanning stretches (helical) occupy residues 708–731, 737–774, 784–816, and 826–847; these read CLAAVIFIYFAALSPAITFGGLLG, LIGVSELIMSTALQGVVFCLLGAQPLLVIGFSGPLLVF, SNHLEYLVGRVWIGFWLVFLALLMVALEGSFLV, and IFAFLISLIFIYETFYKLVKIF. Residues 708–1241 are membrane (anion exchange); it reads CLAAVIFIYF…DEYNEMPMPV (534 aa). The Extracellular portion of the chain corresponds to 848–900; that stretch reads QEHPLHGCSASNSSEVDGGENMTWAGARPTLGPGNRSLAGQSGQGKPRGQPNT. 3 N-linked (GlcNAc...) asparagine glycosylation sites follow: Asn859, Asn868, and Asn882. A helical transmembrane segment spans residues 901-918; that stretch reads ALLSLVLMAGTFFIAFFL. Over 919–933 the chain is Cytoplasmic; the sequence is RKFKNSRFFPGRIRR. Transmembrane regions (helical) follow at residues 934–954, 988–1010, 1036–1059, 1091–1136, and 1163–1199; these read VIGDFGVPIAILIMVLVDYSI, PFPVWMMVASLLPAILVFILIFM, LLLIVAMGGICALFGLPWLAAATV, VTGL…IQFY, and MHLFTALQLLCLALLWAVMSTAASLAFPFILILTVPL. A lipid anchor (S-palmitoyl cysteine) is attached at Cys1173.

The protein belongs to the anion exchanger (TC 2.A.31) family. As to expression, expressed in the liver, stomach, kidney, prostate, thyroid and rectum. In terms of tissue distribution, expressed in the liver and kidney.

It localises to the apical cell membrane. The protein localises to the basolateral cell membrane. The catalysed reaction is hydrogencarbonate(in) + chloride(out) = hydrogencarbonate(out) + chloride(in). Sodium-independent anion exchanger which mediates the electroneutral exchange of chloride for bicarbonate ions across the cell membrane. Plays an important role in osteoclast differentiation and function. Regulates bone resorption and calpain-dependent actin cytoskeleton organization in osteoclasts via anion exchange-dependent control of pH. Essential for intracellular pH regulation in CD8(+) T-cells upon CD3 stimulation, modulating CD8(+) T-cell responses. In Homo sapiens (Human), this protein is Anion exchange protein 2 (SLC4A2).